The sequence spans 220 residues: Deoxyribose-phosphate aldolase (220 aa).

The active-site Proton donor/acceptor is the Asp-89. Lys-151 (schiff-base intermediate with acetaldehyde) is an active-site residue. Lys-180 (proton donor/acceptor) is an active-site residue.

Belongs to the DeoC/FbaB aldolase family. DeoC type 1 subfamily.

The protein resides in the cytoplasm. It carries out the reaction 2-deoxy-D-ribose 5-phosphate = D-glyceraldehyde 3-phosphate + acetaldehyde. It participates in carbohydrate degradation; 2-deoxy-D-ribose 1-phosphate degradation; D-glyceraldehyde 3-phosphate and acetaldehyde from 2-deoxy-alpha-D-ribose 1-phosphate: step 2/2. Functionally, catalyzes a reversible aldol reaction between acetaldehyde and D-glyceraldehyde 3-phosphate to generate 2-deoxy-D-ribose 5-phosphate. This chain is Deoxyribose-phosphate aldolase, found in Bdellovibrio bacteriovorus (strain ATCC 15356 / DSM 50701 / NCIMB 9529 / HD100).